The primary structure comprises 312 residues: Ribosomal RNA small subunit methyltransferase H (312 aa).

S-adenosyl-L-methionine-binding positions include 33 to 35, Asp-51, Phe-78, Asp-97, and Gln-104; that span reads GGY.

This sequence belongs to the methyltransferase superfamily. RsmH family.

It is found in the cytoplasm. The enzyme catalyses cytidine(1402) in 16S rRNA + S-adenosyl-L-methionine = N(4)-methylcytidine(1402) in 16S rRNA + S-adenosyl-L-homocysteine + H(+). In terms of biological role, specifically methylates the N4 position of cytidine in position 1402 (C1402) of 16S rRNA. In Orientia tsutsugamushi (strain Ikeda) (Rickettsia tsutsugamushi), this protein is Ribosomal RNA small subunit methyltransferase H.